The primary structure comprises 232 residues: Phosphatidylserine decarboxylase proenzyme (232 aa).

The active-site Schiff-base intermediate with substrate; via pyruvic acid is S190. Pyruvic acid (Ser); by autocatalysis is present on S190.

It belongs to the phosphatidylserine decarboxylase family. PSD-A subfamily. As to quaternary structure, heterodimer of a large membrane-associated beta subunit and a small pyruvoyl-containing alpha subunit. It depends on pyruvate as a cofactor. Is synthesized initially as an inactive proenzyme. Formation of the active enzyme involves a self-maturation process in which the active site pyruvoyl group is generated from an internal serine residue via an autocatalytic post-translational modification. Two non-identical subunits are generated from the proenzyme in this reaction, and the pyruvate is formed at the N-terminus of the alpha chain, which is derived from the carboxyl end of the proenzyme. The post-translation cleavage follows an unusual pathway, termed non-hydrolytic serinolysis, in which the side chain hydroxyl group of the serine supplies its oxygen atom to form the C-terminus of the beta chain, while the remainder of the serine residue undergoes an oxidative deamination to produce ammonia and the pyruvoyl prosthetic group on the alpha chain.

Its subcellular location is the cell membrane. It catalyses the reaction a 1,2-diacyl-sn-glycero-3-phospho-L-serine + H(+) = a 1,2-diacyl-sn-glycero-3-phosphoethanolamine + CO2. It participates in phospholipid metabolism; phosphatidylethanolamine biosynthesis; phosphatidylethanolamine from CDP-diacylglycerol: step 2/2. Its function is as follows. Catalyzes the formation of phosphatidylethanolamine (PtdEtn) from phosphatidylserine (PtdSer). This is Phosphatidylserine decarboxylase proenzyme from Rhodopseudomonas palustris (strain ATCC BAA-98 / CGA009).